We begin with the raw amino-acid sequence, 397 residues long: Tryptophan synthase beta chain (397 aa).

Lys-87 carries the post-translational modification N6-(pyridoxal phosphate)lysine.

This sequence belongs to the TrpB family. In terms of assembly, tetramer of two alpha and two beta chains. Pyridoxal 5'-phosphate is required as a cofactor.

The enzyme catalyses (1S,2R)-1-C-(indol-3-yl)glycerol 3-phosphate + L-serine = D-glyceraldehyde 3-phosphate + L-tryptophan + H2O. It functions in the pathway amino-acid biosynthesis; L-tryptophan biosynthesis; L-tryptophan from chorismate: step 5/5. Its function is as follows. The beta subunit is responsible for the synthesis of L-tryptophan from indole and L-serine. The sequence is that of Tryptophan synthase beta chain from Cronobacter sakazakii (strain ATCC BAA-894) (Enterobacter sakazakii).